A 403-amino-acid polypeptide reads, in one-letter code: Coenzyme A biosynthesis bifunctional protein CoaBC (403 aa).

Residues 1–197 (MISEIMHPTK…GNNLKKEGNR (197 aa)) form a phosphopantothenoylcysteine decarboxylase region. The interval 198 to 403 (VLILNGGTVE…VEKVKKLVKS (206 aa)) is phosphopantothenate--cysteine ligase. CTP-binding residues include Asp285, Lys294, and Phe327.

This sequence in the N-terminal section; belongs to the HFCD (homo-oligomeric flavin containing Cys decarboxylase) superfamily. In the C-terminal section; belongs to the PPC synthetase family. As to quaternary structure, homododecamer. The CoaC domain is responsible for dodecamer formation. Mg(2+) serves as cofactor. The cofactor is FMN.

It carries out the reaction N-[(R)-4-phosphopantothenoyl]-L-cysteine + H(+) = (R)-4'-phosphopantetheine + CO2. The enzyme catalyses (R)-4'-phosphopantothenate + L-cysteine + CTP = N-[(R)-4-phosphopantothenoyl]-L-cysteine + CMP + diphosphate + H(+). Its pathway is cofactor biosynthesis; coenzyme A biosynthesis. Its function is as follows. Catalyzes two sequential steps in the biosynthesis of coenzyme A. In the first step cysteine is conjugated to 4'-phosphopantothenate to form 4-phosphopantothenoylcysteine. In the second step the latter compound is decarboxylated to form 4'-phosphopantotheine. The sequence is that of Coenzyme A biosynthesis bifunctional protein CoaBC from Methanocaldococcus jannaschii (strain ATCC 43067 / DSM 2661 / JAL-1 / JCM 10045 / NBRC 100440) (Methanococcus jannaschii).